Here is a 419-residue protein sequence, read N- to C-terminus: GTPase Obg (419 aa).

The Obg domain maps to 2–159 (SAFVDAVTVE…FLAKVELQVL (158 aa)). The OBG-type G domain occupies 160–325 (ADVGLLGYPN…LKYEIATTLK (166 aa)). GTP contacts are provided by residues 166–173 (GYPNVGKS), 191–195 (FTTLS), 212–215 (DLPG), 279–282 (NKMD), and 306–308 (SAL). 2 residues coordinate Mg(2+): serine 173 and threonine 193. The 79-residue stretch at 341 to 419 (LNAEDAVDFI…IFSYEFEYLE (79 aa)) folds into the OCT domain.

The protein belongs to the TRAFAC class OBG-HflX-like GTPase superfamily. OBG GTPase family. As to quaternary structure, monomer. Requires Mg(2+) as cofactor.

The protein resides in the cytoplasm. Functionally, an essential GTPase which binds GTP, GDP and possibly (p)ppGpp with moderate affinity, with high nucleotide exchange rates and a fairly low GTP hydrolysis rate. Plays a role in control of the cell cycle, stress response, ribosome biogenesis and in those bacteria that undergo differentiation, in morphogenesis control. This chain is GTPase Obg, found in Acholeplasma laidlawii (strain PG-8A).